Consider the following 464-residue polypeptide: L-aspartate oxidase (464 aa).

FAD-binding positions include 8-11 and 37-44; these read SGLA and NSYLAQAG. Arg248 serves as the catalytic Proton donor/acceptor. FAD-binding positions include Glu329 and 345–346; that span reads SL.

It belongs to the FAD-dependent oxidoreductase 2 family. NadB subfamily. Requires FAD as cofactor.

It is found in the cytoplasm. It carries out the reaction L-aspartate + O2 = iminosuccinate + H2O2. Its pathway is cofactor biosynthesis; NAD(+) biosynthesis; iminoaspartate from L-aspartate (oxidase route): step 1/1. Catalyzes the oxidation of L-aspartate to iminoaspartate, the first step in the de novo biosynthesis of NAD(+). The polypeptide is L-aspartate oxidase (nadB) (Pyrococcus furiosus (strain ATCC 43587 / DSM 3638 / JCM 8422 / Vc1)).